The sequence spans 230 residues: NEDD8-conjugating enzyme Ubc12 (230 aa).

A disordered region spans residues 1–87; that stretch reads MFRLKELQKK…AELRAQKDID (87 aa). Residues 10 to 20 are compositionally biased toward low complexity; that stretch reads KQQQQQQQQQQ. The segment covering 26–36 has biased composition (polar residues); the sequence is TNGTDAVTTEP. The span at 37 to 57 shows a compositional bias: basic and acidic residues; sequence TDVKRQNSNDLKEIRKQKSKD. Residues 61–70 show a composition bias toward polar residues; that stretch reads SLKTKQSSES. The UBC core domain maps to 77 to 221; it reads PAELRAQKDI…VRQSLRGGYI (145 aa). The Glycyl thioester intermediate role is filled by cysteine 159.

Belongs to the ubiquitin-conjugating enzyme family. UBC12 subfamily.

The enzyme catalyses [E1 NEDD8-activating enzyme]-S-[NEDD8 protein]-yl-L-cysteine + [E2 NEDD8-conjugating enzyme]-L-cysteine = [E1 NEDD8-activating enzyme]-L-cysteine + [E2 NEDD8-conjugating enzyme]-S-[NEDD8-protein]-yl-L-cysteine.. It participates in protein modification; protein neddylation. In terms of biological role, accepts the ubiquitin-like protein nedd8 from the uba3-nae1 E1 complex and catalyzes its covalent attachment to other proteins. In Dictyostelium discoideum (Social amoeba), this protein is NEDD8-conjugating enzyme Ubc12 (ube2m).